We begin with the raw amino-acid sequence, 420 residues long: Ribulose bisphosphate carboxylase large chain (420 aa).

Substrate contacts are provided by N103 and T153. K155 functions as the Proton acceptor in the catalytic mechanism. K157 is a substrate binding site. Mg(2+) is bound by residues K181, D183, and E184. Residue K181 is modified to N6-carboxylysine. Residue H274 is the Proton acceptor of the active site. R275, H307, and S359 together coordinate substrate.

Belongs to the RuBisCO large chain family. Type I subfamily. In terms of assembly, heterohexadecamer of 8 large chains and 8 small chains; disulfide-linked. The disulfide link is formed within the large subunit homodimers. Mg(2+) serves as cofactor. Post-translationally, the disulfide bond which can form in the large chain dimeric partners within the hexadecamer appears to be associated with oxidative stress and protein turnover.

It is found in the plastid. It localises to the chloroplast. It catalyses the reaction 2 (2R)-3-phosphoglycerate + 2 H(+) = D-ribulose 1,5-bisphosphate + CO2 + H2O. The catalysed reaction is D-ribulose 1,5-bisphosphate + O2 = 2-phosphoglycolate + (2R)-3-phosphoglycerate + 2 H(+). Its function is as follows. RuBisCO catalyzes two reactions: the carboxylation of D-ribulose 1,5-bisphosphate, the primary event in carbon dioxide fixation, as well as the oxidative fragmentation of the pentose substrate in the photorespiration process. Both reactions occur simultaneously and in competition at the same active site. This chain is Ribulose bisphosphate carboxylase large chain, found in Anemia mexicana (Mexican fern).